The chain runs to 231 residues: MFLVGLTGGIASGKSSVIQVFQQLGCAVIDVDVMARHVVQPGYPAHRRIVEVFGTEVLLENGDINRKVLGDLIFNQPDRRQLLNAITHPEIRKEMMKETFKYFLRGYRYVILDIPLLFETKKLLKYMKHTVVVYCDRDTQLARLMRRNSLNRKDAEARINAQLPLTDKARMARHVLDNSGEWSVTKRQVILLHTELERSLEYLPLRFGVLTGLAAIASLLYLLTHYLLPYA.

The DPCK domain occupies 3–207 (LVGLTGGIAS…RSLEYLPLRF (205 aa)). Residue 8–15 (GGIASGKS) coordinates ATP.

The protein belongs to the CoaE family.

This Homo sapiens (Human) protein is Dephospho-CoA kinase domain-containing protein (DCAKD).